The chain runs to 832 residues: G-type lectin S-receptor-like serine/threonine-protein kinase RLK1 (832 aa).

Residues 1–24 form the signal peptide; that stretch reads MGSLSCSIIHLVLILQLQTFFVFS. Topologically, residues 25-461 are extracellular; sequence QNIRNGSVPV…VPVTGNRAKK (437 aa). Asparagine 29, asparagine 92, asparagine 100, asparagine 178, asparagine 240, and asparagine 251 each carry an N-linked (GlcNAc...) asparagine glycan. The Bulb-type lectin domain occupies 37–157; that stretch reads SLTASESQQI…GSEDSDEVLW (121 aa). Positions 299-349 constitute an EGF-like; atypical domain; that stretch reads RDNMCSPDDALGNMACGYNNICSLGNNKRPKCECPERFVLKDPSNEYGDCL. Intrachain disulfides connect cysteine 303-cysteine 320, cysteine 314-cysteine 330, and cysteine 332-cysteine 348. The 90-residue stretch at 357-446 folds into the PAN domain; the sequence is CRPENQTANS…DSDTFIKVRN (90 aa). The N-linked (GlcNAc...) asparagine glycan is linked to asparagine 361. 2 disulfides stabilise this stretch: cysteine 397–cysteine 420 and cysteine 401–cysteine 407. A glycan (N-linked (GlcNAc...) asparagine) is linked at asparagine 446. Residues 462-482 traverse the membrane as a helical segment; sequence LDWLIIACSVLLGTSAFVIFD. Over 483 to 832 the chain is Cytoplasmic; that stretch reads TSCSYRKTKK…SLSSDPVSLV (350 aa). The Protein kinase domain maps to 531–803; that stretch reads RDFTEELGRG…NVTQMLEGVI (273 aa). ATP contacts are provided by residues 537 to 545 and lysine 563; that span reads LGRGAFGIV. A caM-binding region spans residues 622-638; sequence RRPRPSWEDRKNIAVAI. Aspartate 657 functions as the Proton acceptor in the catalytic mechanism.

It belongs to the protein kinase superfamily. Ser/Thr protein kinase family.

The protein resides in the cell membrane. The enzyme catalyses L-seryl-[protein] + ATP = O-phospho-L-seryl-[protein] + ADP + H(+). It carries out the reaction L-threonyl-[protein] + ATP = O-phospho-L-threonyl-[protein] + ADP + H(+). The chain is G-type lectin S-receptor-like serine/threonine-protein kinase RLK1 (RLK1) from Arabidopsis thaliana (Mouse-ear cress).